Here is a 262-residue protein sequence, read N- to C-terminus: Probable proteasome subunit beta type-7 (262 aa).

Belongs to the peptidase T1B family. The 26S proteasome consists of a 20S proteasome core and two 19S regulatory subunits. The 20S proteasome core is composed of 28 subunits that are arranged in four stacked rings, resulting in a barrel-shaped structure. The two end rings are each formed by seven alpha subunits, and the two central rings are each formed by seven beta subunits. The catalytic chamber with the active sites is on the inside of the barrel.

The protein localises to the cytoplasm. The protein resides in the nucleus. Non-catalytic component of the proteasome, a multicatalytic proteinase complex which is characterized by its ability to cleave peptides with Arg, Phe, Tyr, Leu, and Glu adjacent to the leaving group at neutral or slightly basic pH. The proteasome has an ATP-dependent proteolytic activity. This Schizosaccharomyces pombe (strain 972 / ATCC 24843) (Fission yeast) protein is Probable proteasome subunit beta type-7.